Here is a 454-residue protein sequence, read N- to C-terminus: tRNA-2-methylthio-N(6)-dimethylallyladenosine synthase (454 aa).

The region spanning 6-122 is the MTTase N-terminal domain; sequence RRYHITTFGC…LQDLLQEVLA (117 aa). Residues C15, C51, C85, C157, C161, and C164 each coordinate [4Fe-4S] cluster. The Radical SAM core domain occupies 143 to 380; sequence RESTVTAWVN…NHLVAIKAAE (238 aa). The region spanning 383 to 447 is the TRAM domain; that stretch reads QRYLGRIEEV…AFSLTGEPVK (65 aa).

It belongs to the methylthiotransferase family. MiaB subfamily. As to quaternary structure, monomer. It depends on [4Fe-4S] cluster as a cofactor.

The protein resides in the cytoplasm. The enzyme catalyses N(6)-dimethylallyladenosine(37) in tRNA + (sulfur carrier)-SH + AH2 + 2 S-adenosyl-L-methionine = 2-methylsulfanyl-N(6)-dimethylallyladenosine(37) in tRNA + (sulfur carrier)-H + 5'-deoxyadenosine + L-methionine + A + S-adenosyl-L-homocysteine + 2 H(+). Functionally, catalyzes the methylthiolation of N6-(dimethylallyl)adenosine (i(6)A), leading to the formation of 2-methylthio-N6-(dimethylallyl)adenosine (ms(2)i(6)A) at position 37 in tRNAs that read codons beginning with uridine. This Gloeothece citriformis (strain PCC 7424) (Cyanothece sp. (strain PCC 7424)) protein is tRNA-2-methylthio-N(6)-dimethylallyladenosine synthase.